A 266-amino-acid polypeptide reads, in one-letter code: Beta-lactamase OXA-20 (266 aa).

The N-terminal stretch at 1–21 (MIIRFLALLFSAVVLVSLGHA) is a signal peptide. The Acyl-ester intermediate role is filled by Ser-72. Lys-75 is subject to N6-carboxylysine. 210–212 (KTG) is a binding site for substrate.

Belongs to the class-D beta-lactamase family.

It carries out the reaction a beta-lactam + H2O = a substituted beta-amino acid. With respect to regulation, inhibited by clavulanic acid. This is an oxacillin-hydrolyzing beta-lactamase. This Pseudomonas aeruginosa protein is Beta-lactamase OXA-20 (bla).